The sequence spans 122 residues: MADFNSPIQYLKEDSRDRTSIGSLEYDENADTMIPSFAAGLEEFEPIPDFDPTTSTSLYSQLTHNMEKIAEEEDNNFLHDTREFTSLVPDEADNKPEDDEESGAKPKKKKHLFPKLSSHKSK.

2 disordered regions span residues 1–27 (MADFNSPIQYLKEDSRDRTSIGSLEYD) and 73–122 (EDNN…HKSK). Residue A2 is modified to N-acetylalanine; by host. Basic residues predominate over residues 105 to 122 (KPKKKKHLFPKLSSHKSK).

Belongs to the asfivirus structural protein p14.5 family. In terms of assembly, interacts with the major capsid protein. Interacts with host IRF3; this interaction interferes with the recruitment of IRF3 to TBK1. In terms of processing, acetylated.

The protein resides in the virion. Functionally, structural protein required for transport of intracellular particles from the assembly sites to the plasma membrane. Binds to both ssDNA and dsDNA. Suppressed the activation of the cGAS/STING pathway by interfering with the recruitment of IRF3 to TBK1, which in turn suppresses IRF3 phosphorylation, decreasing interferon production. This chain is Structural protein p14.5, found in African swine fever virus (isolate Warthog/Namibia/Wart80/1980) (ASFV).